The sequence spans 128 residues: Phosphoribosyl-AMP cyclohydrolase (128 aa).

D94 is a Mg(2+) binding site. C95 contacts Zn(2+). Residues D96 and D98 each coordinate Mg(2+). Residues C111 and C118 each coordinate Zn(2+).

This sequence belongs to the PRA-CH family. As to quaternary structure, homodimer. The cofactor is Mg(2+). Requires Zn(2+) as cofactor.

It localises to the cytoplasm. It carries out the reaction 1-(5-phospho-beta-D-ribosyl)-5'-AMP + H2O = 1-(5-phospho-beta-D-ribosyl)-5-[(5-phospho-beta-D-ribosylamino)methylideneamino]imidazole-4-carboxamide. Its pathway is amino-acid biosynthesis; L-histidine biosynthesis; L-histidine from 5-phospho-alpha-D-ribose 1-diphosphate: step 3/9. Its function is as follows. Catalyzes the hydrolysis of the adenine ring of phosphoribosyl-AMP. This is Phosphoribosyl-AMP cyclohydrolase from Streptomyces coelicolor (strain ATCC BAA-471 / A3(2) / M145).